The chain runs to 424 residues: 3-phosphoshikimate 1-carboxyvinyltransferase (424 aa).

Lys-20, Ser-21, and Arg-25 together coordinate 3-phosphoshikimate. A phosphoenolpyruvate-binding site is contributed by Lys-20. Phosphoenolpyruvate is bound by residues Gly-92 and Arg-120. The 3-phosphoshikimate site is built by Ser-165, Gln-167, Asp-313, and Lys-340. Gln-167 contacts phosphoenolpyruvate. Asp-313 acts as the Proton acceptor in catalysis. Arg-344 and Arg-386 together coordinate phosphoenolpyruvate.

The protein belongs to the EPSP synthase family. Monomer.

It is found in the cytoplasm. The enzyme catalyses 3-phosphoshikimate + phosphoenolpyruvate = 5-O-(1-carboxyvinyl)-3-phosphoshikimate + phosphate. It functions in the pathway metabolic intermediate biosynthesis; chorismate biosynthesis; chorismate from D-erythrose 4-phosphate and phosphoenolpyruvate: step 6/7. Its function is as follows. Catalyzes the transfer of the enolpyruvyl moiety of phosphoenolpyruvate (PEP) to the 5-hydroxyl of shikimate-3-phosphate (S3P) to produce enolpyruvyl shikimate-3-phosphate and inorganic phosphate. This chain is 3-phosphoshikimate 1-carboxyvinyltransferase, found in Bacillus cytotoxicus (strain DSM 22905 / CIP 110041 / 391-98 / NVH 391-98).